Consider the following 132-residue polypeptide: Cytochrome c-554 (132 aa).

An N-terminal signal peptide occupies residues 1–24 (MKSISMLTLAASVAFAVTAGQAVA). The Cytochrome c domain occupies 26-126 (GDPAAGEKVF…NVWAYLSQFG (101 aa)). Heme c-binding residues include cysteine 38, cysteine 41, histidine 42, and methionine 104.

In terms of processing, binds 1 heme c group covalently per subunit.

Its subcellular location is the periplasm. This is Cytochrome c-554 from Methylosinus trichosporium.